The primary structure comprises 386 residues: MEINKLVCFSFSLVLILGLVESFHYHERELESEEGFMGMYDRWREQHNIEMRSPERFNVFKYNVRRIHESNKMDKPYKLKVNEFADMTNLEFVNTYANSKISHFQALRGSAPGSIDTDPNKDFIYANVTKIPDKVDWREKNAVTDVKGQGGCGSCWAFAAVVALEGINAIRTGKLVKFSEQQLVDCDMTNAGCDGGLMEPAFTYVIKHGGIAPEASYPYVGKRETCDKAKIKDVLKIDGRQNVPGLDEEALRKAVAHQPVATGIQLSGHGLQFYSEGVYTGDCGTEPNHGVGIVGYGENEKGIKFWTVKNSWGPTWGEKGYIHLQRGARKEGLCGVAMHSSFPIMNDPNPPKDDPNGPKDDPDAPKDPKFKTTQRLQGIRTKLLEL.

An N-terminal signal peptide occupies residues Met1 to Ser22. Positions Leu6 to Val20 are T-cell epitope. MHC class II peptide able to activate CD(4+) T cells of the ragweed pollen-allergic patients indicated by significantly increased IL-2 production compared to non-allergic individuals. Not recognized by IgE of the patients allergic to ragweed pollen. The propeptide at Phe23–Arg108 is activation peptide. N-linked (GlcNAc...) (complex) asparagine glycosylation is present at Asn127. 3 disulfide bridges follow: Cys152–Cys193, Cys186–Cys226, and Cys283–Cys334. Residue Cys155 is part of the active site. The segment at Gly173–Cys186 is B-cell epitope. Binds to IgE of the patients allergic to ragweed pollen. Catalysis depends on residues His289 and Asn310. The tract at residues Ser340–Gln377 is disordered. Over residues Pro350 to Phe370 the composition is skewed to basic and acidic residues. The propeptide at Lys371 to Leu386 is removed in mature form.

It belongs to the peptidase C1 family. Homodimer. Post-translationally, autocatalytic proteolytic cleavage of N-terminal activation peptide. N-glycosylated. Glycosylation is not required for binding to IgE. As to expression, expressed in pollen (at protein and mRNA level).

With respect to regulation, activated by L-cysteine. Inhibited by cysteine protease inhibitor E64 (L-trans-epoxysuccinyl-leucylamide-(4-guanido)-butane). Inhibited by cysteine/serine protease inhibitor leupeptin. Not inhibited by serine protease inhibitors 4-(2-aminoethyl)benzenesulfonyl fluoride hydrochloride (AEBSF) and phenylmethanesulfonyl fluoride (PMSF), metallo protease inhibitor bestatin or aspartic protease inhibitor pepstatin A. Cysteine protease. Hydrolyzes casein and synthetic peptide Boc-Val-Leu-Lys-7-amino-4-methylcoumarin (Boc-VLK-AMC) in vitro. The sequence is that of Cysteine protease Amb a 11.0101 from Ambrosia artemisiifolia (Common ragweed).